We begin with the raw amino-acid sequence, 363 residues long: Homeobox protein DTH-2 (363 aa).

Positions 133–192 (RRKRRILFSQAQIYELERRFKQQKYLSAPEREHLANLINLTPTQVKIWFQNHRYKCKRSQ) form a DNA-binding region, homeobox. A disordered region spans residues 189–246 (KRSQKDKEKEQQKEKSYHLKKNIVDDKERSPNKQICNASSSDRSTPEEPVAKAKESGL). Basic and acidic residues predominate over residues 191-219 (SQKDKEKEQQKEKSYHLKKNIVDDKERSP). A compositionally biased stretch (polar residues) spans 220–231 (NKQICNASSSDR). A compositionally biased stretch (basic and acidic residues) spans 232–246 (STPEEPVAKAKESGL).

This sequence belongs to the NK-2 homeobox family. As to expression, intestine and unidentified peripheral parenchymal cells. Slightly higher levels in the cephalic region compared to other body regions.

It is found in the nucleus. Its function is as follows. This protein might be involved in determination and/or differentiation of nerve cells in the continuous replacement of neurons in the cephalic region. The protein is Homeobox protein DTH-2 (DTH-2) of Girardia tigrina (Planarian).